Here is an 82-residue protein sequence, read N- to C-terminus: Costars family protein v1g158749 (82 aa).

This sequence belongs to the costars family.

The polypeptide is Costars family protein v1g158749 (Nematostella vectensis (Starlet sea anemone)).